The sequence spans 393 residues: Flap endonuclease 1 (393 aa).

The N-domain stretch occupies residues 1–108 (MGVLGLSKLL…SELESRRQRA (108 aa)). Residue aspartate 34 coordinates Mg(2+). Arginine 74 serves as a coordination point for DNA. Residue aspartate 90 participates in Mg(2+) binding. A compositionally biased stretch (basic and acidic residues) spans 99-120 (SELESRRQRAEDAKHEFEKAKE). The disordered stretch occupies residues 99–127 (SELESRRQRAEDAKHEFEKAKEEGDDEAM). The segment at 126–257 (AMEKMSKRMV…HKAWEGIKKY (132 aa)) is I-domain. Residues glutamate 162, glutamate 164, aspartate 183, and aspartate 185 each contribute to the Mg(2+) site. DNA is bound at residue glutamate 162. DNA contacts are provided by glycine 235 and aspartate 237. A Mg(2+)-binding site is contributed by aspartate 237. The tract at residues 340–348 (TQGRLDQFF) is interaction with PCNA. Residues 358–393 (NSEASTAGTKRNRGAVALPGVLQRKSSSGHKKAVKK) are disordered. Residues 384 to 393 (SSGHKKAVKK) are compositionally biased toward basic residues.

The protein belongs to the XPG/RAD2 endonuclease family. FEN1 subfamily. Interacts with PCNA. Three molecules of FEN1 bind to one PCNA trimer with each molecule binding to one PCNA monomer. PCNA stimulates the nuclease activity without altering cleavage specificity. Requires Mg(2+) as cofactor. Post-translationally, phosphorylated. Phosphorylation upon DNA damage induces relocalization to the nuclear plasma.

The protein resides in the nucleus. It is found in the nucleolus. Its subcellular location is the nucleoplasm. It localises to the mitochondrion. Functionally, structure-specific nuclease with 5'-flap endonuclease and 5'-3' exonuclease activities involved in DNA replication and repair. During DNA replication, cleaves the 5'-overhanging flap structure that is generated by displacement synthesis when DNA polymerase encounters the 5'-end of a downstream Okazaki fragment. It enters the flap from the 5'-end and then tracks to cleave the flap base, leaving a nick for ligation. Also involved in the long patch base excision repair (LP-BER) pathway, by cleaving within the apurinic/apyrimidinic (AP) site-terminated flap. Acts as a genome stabilization factor that prevents flaps from equilibrating into structures that lead to duplications and deletions. Also possesses 5'-3' exonuclease activity on nicked or gapped double-stranded DNA, and exhibits RNase H activity. Also involved in replication and repair of rDNA and in repairing mitochondrial DNA. In Trypanosoma brucei brucei (strain 927/4 GUTat10.1), this protein is Flap endonuclease 1.